The sequence spans 107 residues: MARAALSAAPSNPRLLRVALLLLLLVAAGRRAAGASVATELRCQCLQTLQGIHPKNIQSVNVKSPGPHCAQTEVIATLKNGRKACLNPASPIVKKIIEKMLNSDKSN.

The first 34 residues, 1 to 34 (MARAALSAAPSNPRLLRVALLLLLLVAAGRRAAG), serve as a signal peptide directing secretion. Intrachain disulfides connect Cys-43–Cys-69 and Cys-45–Cys-85.

The protein belongs to the intercrine alpha (chemokine CxC) family. In terms of processing, N-terminal processed forms GRO-alpha(4-73), GRO-alpha(5-73) and GRO-alpha(6-73) are produced by proteolytic cleavage after secretion from peripheral blood monocytes.

It is found in the secreted. Has chemotactic activity for neutrophils. May play a role in inflammation and exerts its effects on endothelial cells in an autocrine fashion. In vitro, the processed forms GRO-alpha(4-73), GRO-alpha(5-73) and GRO-alpha(6-73) show a 30-fold higher chemotactic activity. The chain is Growth-regulated alpha protein (CXCL1) from Homo sapiens (Human).